The following is a 619-amino-acid chain: DNA mismatch repair protein MutL (619 aa).

This sequence belongs to the DNA mismatch repair MutL/HexB family.

Functionally, this protein is involved in the repair of mismatches in DNA. It is required for dam-dependent methyl-directed DNA mismatch repair. May act as a 'molecular matchmaker', a protein that promotes the formation of a stable complex between two or more DNA-binding proteins in an ATP-dependent manner without itself being part of a final effector complex. The polypeptide is DNA mismatch repair protein MutL (Xylella fastidiosa (strain M23)).